Here is a 278-residue protein sequence, read N- to C-terminus: MSSGAAHSALTEEDVMKLLATQAHLGSTNLNFQMQQYVYKRRFDGPNIINVKKTWEKLLLAARAIAAVENPADVVVVSARPYAQRALLKFAAHTGATAIFGRFSPGCLTNQIQKTFKEPRLLVISDPRIDHQAVTEASYVGVPVISFVNTESPLKLIDIGVPCNNKGERSIGLMWWMLAREILILRGKISRQTGFVLDGKEIMPDLYFYRDPTETEKEETGAHAEVAETQEFQQQPDIDFTAQGGKVEDWAAETATWTNEGKTAADEWATGAQTQSNW.

Ser2 bears the N-acetylserine mark. The tract at residues 258 to 278 (TNEGKTAADEWATGAQTQSNW) is disordered.

This sequence belongs to the universal ribosomal protein uS2 family. Component of the small ribosomal subunit. Mature ribosomes consist of a small (40S) and a large (60S) subunit. The 40S subunit contains about 33 different proteins and 1 molecule of RNA (18S). The 60S subunit contains about 49 different proteins and 3 molecules of RNA (28S, 5.8S and 5S). Interacts with rps-21.

Its subcellular location is the cytoplasm. Its function is as follows. Required for the assembly and/or stability of the 40S ribosomal subunit. Required for the processing of the 20S rRNA-precursor to mature 18S rRNA in a late step of the maturation of 40S ribosomal subunits. This chain is Small ribosomal subunit protein uS2, found in Caenorhabditis briggsae.